The following is a 100-amino-acid chain: Co-chaperonin GroES (100 aa).

It belongs to the GroES chaperonin family. As to quaternary structure, heptamer of 7 subunits arranged in a ring. Interacts with the chaperonin GroEL.

Its subcellular location is the cytoplasm. In terms of biological role, together with the chaperonin GroEL, plays an essential role in assisting protein folding. The GroEL-GroES system forms a nano-cage that allows encapsulation of the non-native substrate proteins and provides a physical environment optimized to promote and accelerate protein folding. GroES binds to the apical surface of the GroEL ring, thereby capping the opening of the GroEL channel. This is Co-chaperonin GroES from Mycolicibacterium smegmatis (strain ATCC 700084 / mc(2)155) (Mycobacterium smegmatis).